The sequence spans 310 residues: Protoheme IX farnesyltransferase (310 aa).

Transmembrane regions (helical) follow at residues 26–46 (VMSLVVFTALVGLLVAPATVH), 47–67 (PMIALTGILFIALGAGASGAL), 95–115 (GEALGLGLALSGIAVVMLGLA), 118–138 (LFAAGLLAFTIFFYAVVYSMW), 147–167 (IVIGGAAGAFPPMIGWAVATG), 174–194 (LFMFALIFMWTPPHFWSLALF), 220–240 (VLAYALLLAPLAVAGAFTGIG), 243–263 (LYLVVALALNGWLLRGAVRIW), and 281–301 (FFRFSLYYLFLHFGAILAEAA).

The protein belongs to the UbiA prenyltransferase family. Protoheme IX farnesyltransferase subfamily. Interacts with CtaA.

Its subcellular location is the cell inner membrane. It catalyses the reaction heme b + (2E,6E)-farnesyl diphosphate + H2O = Fe(II)-heme o + diphosphate. The protein operates within porphyrin-containing compound metabolism; heme O biosynthesis; heme O from protoheme: step 1/1. Its function is as follows. Converts heme B (protoheme IX) to heme O by substitution of the vinyl group on carbon 2 of heme B porphyrin ring with a hydroxyethyl farnesyl side group. The chain is Protoheme IX farnesyltransferase from Cereibacter sphaeroides (strain ATCC 17025 / ATH 2.4.3) (Rhodobacter sphaeroides).